The primary structure comprises 253 residues: Ubiquinone/menaquinone biosynthesis C-methyltransferase UbiE (253 aa).

Residues T76, D97, and 125–126 (NA) each bind S-adenosyl-L-methionine.

It belongs to the class I-like SAM-binding methyltransferase superfamily. MenG/UbiE family.

The catalysed reaction is a 2-demethylmenaquinol + S-adenosyl-L-methionine = a menaquinol + S-adenosyl-L-homocysteine + H(+). It catalyses the reaction a 2-methoxy-6-(all-trans-polyprenyl)benzene-1,4-diol + S-adenosyl-L-methionine = a 5-methoxy-2-methyl-3-(all-trans-polyprenyl)benzene-1,4-diol + S-adenosyl-L-homocysteine + H(+). Its pathway is quinol/quinone metabolism; menaquinone biosynthesis; menaquinol from 1,4-dihydroxy-2-naphthoate: step 2/2. It functions in the pathway cofactor biosynthesis; ubiquinone biosynthesis. In terms of biological role, methyltransferase required for the conversion of demethylmenaquinol (DMKH2) to menaquinol (MKH2) and the conversion of 2-polyprenyl-6-methoxy-1,4-benzoquinol (DDMQH2) to 2-polyprenyl-3-methyl-6-methoxy-1,4-benzoquinol (DMQH2). The polypeptide is Ubiquinone/menaquinone biosynthesis C-methyltransferase UbiE (Rhodopseudomonas palustris (strain BisB5)).